The primary structure comprises 5087 residues: Nonribosomal peptide synthetase sidC (5087 aa).

Residues 165–563 are adenylation 1; sequence HEMVRHTGNE…NGELQCMGRI (399 aa). Residues 671–744 form the Carrier 1 domain; the sequence is EPAGDIEQKI…KMAALVLKSQ (74 aa). Serine 705 is modified (O-(pantetheine 4'-phosphoryl)serine). The interval 782–1112 is condensation 1; the sequence is DIIPCSPIQT…LFDTLFVWQD (331 aa). The interval 1217–1611 is adenylation 2; it reads ELAKTDSERI…GRRDDLVKIR (395 aa). The Carrier 2 domain occupies 1740 to 1817; it reads ENLTDNEAKV…RLTRKISQSI (78 aa). The residue at position 1777 (serine 1777) is an O-(pantetheine 4'-phosphoryl)serine. The condensation 2 stretch occupies residues 1855–2272; the sequence is KILPCTSLQE…RVMDFSLVES (418 aa). In terms of domain architecture, Carrier 3 spans 2302 to 2378; sequence EEWSAESLEI…EIASVLQGSK (77 aa). At serine 2339 the chain carries O-(pantetheine 4'-phosphoryl)serine. The tract at residues 2419–2831 is condensation 3; sequence PCTTPQAGML…STSSSLDTAS (413 aa). The segment at 2860 to 3258 is adenylation 3; sequence ATRHPSRVAL…GRIDDQVKLR (399 aa). Residues 3387–3464 enclose the Carrier 4 domain; the sequence is TEDTDTIRKI…LLAKAVESPD (78 aa). Position 3424 is an O-(pantetheine 4'-phosphoryl)serine (serine 3424). The interval 3506–3910 is condensation 4; sequence ITPCTSLQDG…RSLVEEPFSN (405 aa). Residues 3943-4019 form the Carrier 5 domain; it reads FQWSQAASLL…TMMAEVTVNG (77 aa). An O-(pantetheine 4'-phosphoryl)serine modification is found at serine 3980. Residues 4051-4416 form a condensation 5 region; the sequence is EHIYPATPLQ…EYSICVELEA (366 aa). In terms of domain architecture, Carrier 6 spans 4496–4569; it reads SLLEERIRDT…KMAEIVNSAR (74 aa). Serine 4530 carries the O-(pantetheine 4'-phosphoryl)serine modification. Residues 4610–4913 are condensation 6; the sequence is FLPATAGQVY…IQSDLHEIGS (304 aa). The disordered stretch occupies residues 5013–5048; it reads DVYKVSPPGSQLSQDSPEKQEANNKPSPQPSVDIEA.

The protein belongs to the NRP synthetase family.

Its pathway is siderophore biosynthesis. Nonribosomal peptide synthetase; part of the siderophore biosynthetic pathway. Arthroderma benhamiae produces 2 types of extracellular siderophores, ferrichrome C and ferricrocin. The biosynthesis of these siderophores depends on the hydroxylation of ornithine to N(5)-hydroxyornithine, catalyzed by the monooxygenase sidA. The structure of ferricrocin differs from ferrichrome C only by a serine for alanine substitution and the assembly of both siderophores is suggested to be performed by the nonribosomal peptide synthase (NRPS) sidC. This Arthroderma benhamiae (strain ATCC MYA-4681 / CBS 112371) (Trichophyton mentagrophytes) protein is Nonribosomal peptide synthetase sidC.